Reading from the N-terminus, the 356-residue chain is NADH-quinone oxidoreductase subunit H (356 aa).

Helical transmembrane passes span 16-36, 52-72, 85-105, 117-137, 163-183, 201-221, 254-274, 295-315, and 334-354; these read IAVL…AFLL, PNVV…KFVF, LYLL…AVVP, VGIL…IIGG, IGFI…SEII, WPMP…ISAL, FMVG…ILFF, AWYF…FAMV, and IFLP…VYGP.

The protein belongs to the complex I subunit 1 family. As to quaternary structure, NDH-1 is composed of 14 different subunits. Subunits NuoA, H, J, K, L, M, N constitute the membrane sector of the complex.

Its subcellular location is the cell inner membrane. It carries out the reaction a quinone + NADH + 5 H(+)(in) = a quinol + NAD(+) + 4 H(+)(out). Functionally, NDH-1 shuttles electrons from NADH, via FMN and iron-sulfur (Fe-S) centers, to quinones in the respiratory chain. The immediate electron acceptor for the enzyme in this species is believed to be ubiquinone. Couples the redox reaction to proton translocation (for every two electrons transferred, four hydrogen ions are translocated across the cytoplasmic membrane), and thus conserves the redox energy in a proton gradient. This subunit may bind ubiquinone. The sequence is that of NADH-quinone oxidoreductase subunit H from Maricaulis maris (strain MCS10) (Caulobacter maris).